A 165-amino-acid polypeptide reads, in one-letter code: Cyclic pyranopterin monophosphate synthase (165 aa).

Residues 76–78 and 114–115 each bind substrate; these read LCH and ME. Residue Asp-129 is part of the active site.

This sequence belongs to the MoaC family. In terms of assembly, homohexamer; trimer of dimers.

The enzyme catalyses (8S)-3',8-cyclo-7,8-dihydroguanosine 5'-triphosphate = cyclic pyranopterin phosphate + diphosphate. It participates in cofactor biosynthesis; molybdopterin biosynthesis. Catalyzes the conversion of (8S)-3',8-cyclo-7,8-dihydroguanosine 5'-triphosphate to cyclic pyranopterin monophosphate (cPMP). The chain is Cyclic pyranopterin monophosphate synthase from Brucella abortus (strain 2308).